The following is a 262-amino-acid chain: Type III pantothenate kinase (262 aa).

Position 9–16 (9–16 (DSGNTRVK)) interacts with ATP. Substrate is bound by residues Tyr-93 and 100-103 (GSDR). The active-site Proton acceptor is the Asp-102. Asp-122 is a binding site for K(+). ATP is bound at residue Thr-125. Residue Thr-175 participates in substrate binding.

This sequence belongs to the type III pantothenate kinase family. In terms of assembly, homodimer. NH4(+) serves as cofactor. K(+) is required as a cofactor.

The protein localises to the cytoplasm. It carries out the reaction (R)-pantothenate + ATP = (R)-4'-phosphopantothenate + ADP + H(+). It participates in cofactor biosynthesis; coenzyme A biosynthesis; CoA from (R)-pantothenate: step 1/5. Functionally, catalyzes the phosphorylation of pantothenate (Pan), the first step in CoA biosynthesis. The protein is Type III pantothenate kinase of Nitrosospira multiformis (strain ATCC 25196 / NCIMB 11849 / C 71).